A 511-amino-acid polypeptide reads, in one-letter code: UDP-N-acetylhexosamine pyrophosphorylase-like protein 1 (511 aa).

Residues 1–19 (MDRSESAESAESRRRRAEE) are compositionally biased toward basic and acidic residues. Residues 1-22 (MDRSESAESAESRRRRAEESGQ) form a disordered region. The Substrate binding motif lies at 117–120 (LAGG). Residues 117–120 (LAGG), Lys131, Gln205, and Gly231 each bind UTP. A substrate-binding site is contributed by Asn232. Asp262 is a binding site for UTP. The Substrate binding signature appears at 312–313 (EY). Residue Lys386 coordinates UTP. Lys416 lines the substrate pocket.

Belongs to the UDPGP type 1 family.

In Xenopus tropicalis (Western clawed frog), this protein is UDP-N-acetylhexosamine pyrophosphorylase-like protein 1 (uap1l1).